Here is a 236-residue protein sequence, read N- to C-terminus: MAKLDAQSIINYIGSAKKKTPVKVYVKGALDQLNVPAGIKTFFSGNAGVLFGDWADVEPFLKANAANIEDYELENDARNSAVPMADLKQYNARIEPGAIIRDQVLIGDNAVIMMGAVINIGAEIGEGSMIDMGAILGGRAIVGKNCHIGAGTVLAGVVEPPSAKPVQIDDDVLIGANAAVLEGVHVGKGAVVAAGAIVIEDVAPNTVVGGVPARKLKDIDDKTKSKTELMAELRNL.

It belongs to the transferase hexapeptide repeat family. DapH subfamily.

It catalyses the reaction (S)-2,3,4,5-tetrahydrodipicolinate + acetyl-CoA + H2O = L-2-acetamido-6-oxoheptanedioate + CoA. Its pathway is amino-acid biosynthesis; L-lysine biosynthesis via DAP pathway; LL-2,6-diaminopimelate from (S)-tetrahydrodipicolinate (acetylase route): step 1/3. Its function is as follows. Catalyzes the transfer of an acetyl group from acetyl-CoA to tetrahydrodipicolinate. This chain is 2,3,4,5-tetrahydropyridine-2,6-dicarboxylate N-acetyltransferase, found in Lactiplantibacillus plantarum (strain ATCC BAA-793 / NCIMB 8826 / WCFS1) (Lactobacillus plantarum).